The following is a 318-amino-acid chain: UDP-3-O-acylglucosamine N-acyltransferase (318 aa).

H230 (proton acceptor) is an active-site residue.

This sequence belongs to the transferase hexapeptide repeat family. LpxD subfamily. Homotrimer.

The catalysed reaction is a UDP-3-O-[(3R)-3-hydroxyacyl]-alpha-D-glucosamine + a (3R)-hydroxyacyl-[ACP] = a UDP-2-N,3-O-bis[(3R)-3-hydroxyacyl]-alpha-D-glucosamine + holo-[ACP] + H(+). The protein operates within bacterial outer membrane biogenesis; LPS lipid A biosynthesis. Catalyzes the N-acylation of UDP-3-O-acylglucosamine using 3-hydroxyacyl-ACP as the acyl donor. Is involved in the biosynthesis of lipid A, a phosphorylated glycolipid that anchors the lipopolysaccharide to the outer membrane of the cell. This Wolinella succinogenes (strain ATCC 29543 / DSM 1740 / CCUG 13145 / JCM 31913 / LMG 7466 / NCTC 11488 / FDC 602W) (Vibrio succinogenes) protein is UDP-3-O-acylglucosamine N-acyltransferase.